The following is a 979-amino-acid chain: Translation initiation factor IF-2 (979 aa).

The disordered stretch occupies residues 68–392 (VKQKQGTPAS…SRAAQDAMEL (325 aa)). Composition is skewed to basic and acidic residues over residues 102–179 (QDMR…KPEE), 217–229 (EMEK…EVFR), and 260–273 (TKED…DADG). Residues 309–326 (PSGNKNNNRPAQQQSNAS) show a composition bias toward polar residues. Residues 347–356 (DVQRQVKETL) show a composition bias toward basic and acidic residues. A tr-type G domain is found at 478-646 (ARPPIVTVMG…KVLLEADILE (169 aa)). The tract at residues 487-494 (GHVDHGKT) is G1. 487 to 494 (GHVDHGKT) provides a ligand contact to GTP. Positions 512–516 (GITQH) are G2. A G3 region spans residues 534–537 (DTPG). GTP-binding positions include 534–538 (DTPGH) and 588–591 (NKID). The tract at residues 588–591 (NKID) is G4. The tract at residues 624 to 626 (SAK) is G5.

Belongs to the TRAFAC class translation factor GTPase superfamily. Classic translation factor GTPase family. IF-2 subfamily.

Its subcellular location is the cytoplasm. In terms of biological role, one of the essential components for the initiation of protein synthesis. Protects formylmethionyl-tRNA from spontaneous hydrolysis and promotes its binding to the 30S ribosomal subunits. Also involved in the hydrolysis of GTP during the formation of the 70S ribosomal complex. This Porphyromonas gingivalis (strain ATCC 33277 / DSM 20709 / CIP 103683 / JCM 12257 / NCTC 11834 / 2561) protein is Translation initiation factor IF-2.